The sequence spans 117 residues: Gamma-aminobutyric acid receptor-associated protein-like 1 (117 aa).

Glycine 116 carries Phosphatidylethanolamine amidated glycine; alternate lipidation. Glycine 116 carries the Phosphatidylserine amidated glycine; alternate lipid modification. Position 117 (lysine 117) is a propeptide, removed in mature form.

The protein belongs to the ATG8 family. Interacts with ATG13, OPRK1, RB1CC1 and ULK1. Interacts with TP53INP1 and TP53INP2. Directly interacts with SQSTM1. Interacts with ATG3, ATG7 and MAP15. Interacts with TECPR2. Interacts with TBC1D5. Interacts with MAPK15. Interacts with TRIM5. Interacts with MEFV and TRIM21. Interacts with WDFY3. Interacts with the reticulophagy receptor TEX264. Interacts with UBA5. Interacts with KBTBD6 and KBTBD7; the interaction is direct. Interacts with reticulophagy regulators RETREG1, RETREG2 and RETREG3. Interacts with IRGM. Interacts with DNM2. Interacts with NCOA4 (via C-terminus). The precursor molecule is cleaved by ATG4 (ATG4A, ATG4B, ATG4C or ATG4D) to expose the glycine at the C-terminus and form the cytosolic form, GABARAPL1-I. The processed form is then activated by APG7L/ATG7, transferred to ATG3 and conjugated to phosphatidylethanolamine (PE) phospholipid to form the membrane-bound form, GABARAPL1-II. During non-canonical autophagy, the processed form is conjugated to phosphatidylserine (PS) phospholipid. ATG4 proteins also mediate the delipidation of PE-conjugated forms required for GABARAPL1 recycling when autophagosomes fuse with lysosomes. In addition, ATG4B and ATG4D mediate delipidation of ATG8 proteins conjugated to PS during non-canonical autophagy. ATG4B constitutes the major protein for proteolytic activation. ATG4D is the main enzyme for delipidation activity.

Its subcellular location is the cytoplasmic vesicle. It is found in the autophagosome. The protein localises to the cytoplasmic vesicle membrane. The protein resides in the cytoplasm. It localises to the cytoskeleton. Its subcellular location is the endoplasmic reticulum. It is found in the golgi apparatus. Ubiquitin-like modifier that increases cell-surface expression of kappa-type opioid receptor through facilitating anterograde intracellular trafficking of the receptor. Involved in formation of autophagosomal vacuoles. While LC3s are involved in elongation of the phagophore membrane, the GABARAP/GATE-16 subfamily is essential for a later stage in autophagosome maturation. Through its interaction with the reticulophagy receptor TEX264, participates in the remodeling of subdomains of the endoplasmic reticulum into autophagosomes upon nutrient stress, which then fuse with lysosomes for endoplasmic reticulum turnover. The protein is Gamma-aminobutyric acid receptor-associated protein-like 1 of Bos taurus (Bovine).